The primary structure comprises 89 residues: uncharacterized protein (89 aa).

Residue methionine 1 is a topological domain, cytoplasmic. Residues 2–22 (LFEIIYIVSSLFYIVSIIYTL) traverse the membrane as a helical segment. The Extracellular segment spans residues 23–89 (MRIKHINTVA…ELKKSKLCEG (67 aa)).

It is found in the host membrane. This is an uncharacterized protein from Sulfolobus islandicus filamentous virus (isolate Iceland/Hveragerdi) (SIFV).